Consider the following 308-residue polypeptide: Cytochrome b (308 aa).

4 consecutive transmembrane segments (helical) span residues 1 to 21 (FGLLLGICLIVQIVTGLLLAA), 45 to 66 (WLIRNLHANGASFFFICIYLHI), 81 to 101 (WNIGVILLLTLMATAFVGYVX), and 146 to 166 (FFALHFLLPFVFAGLTLVHLT). The heme b site is built by histidine 51 and histidine 65. Residues histidine 150 and histidine 164 each contribute to the heme b site. Histidine 169 is an a ubiquinone binding site. The next 3 membrane-spanning stretches (helical) occupy residues 194 to 214 (TKDVLGFVLMLIPLITLALFS), 256 to 276 (LGGVLALAASVLVLFLIPFLH), and 288 to 308 (LSQILFWTLVANLLMLTWVSN).

Belongs to the cytochrome b family. The cytochrome bc1 complex contains 11 subunits: 3 respiratory subunits (MT-CYB, CYC1 and UQCRFS1), 2 core proteins (UQCRC1 and UQCRC2) and 6 low-molecular weight proteins (UQCRH/QCR6, UQCRB/QCR7, UQCRQ/QCR8, UQCR10/QCR9, UQCR11/QCR10 and a cleavage product of UQCRFS1). This cytochrome bc1 complex then forms a dimer. Heme b serves as cofactor.

The protein localises to the mitochondrion inner membrane. In terms of biological role, component of the ubiquinol-cytochrome c reductase complex (complex III or cytochrome b-c1 complex) that is part of the mitochondrial respiratory chain. The b-c1 complex mediates electron transfer from ubiquinol to cytochrome c. Contributes to the generation of a proton gradient across the mitochondrial membrane that is then used for ATP synthesis. The polypeptide is Cytochrome b (MT-CYB) (Pomatostomus ruficeps (Chestnut-crowned babbler)).